Consider the following 57-residue polypeptide: Large ribosomal subunit protein bL32B (57 aa).

It belongs to the bacterial ribosomal protein bL32 family.

This is Large ribosomal subunit protein bL32B (rpmF2) from Listeria innocua serovar 6a (strain ATCC BAA-680 / CLIP 11262).